The chain runs to 192 residues: Dynein axonemal light chain 1 (192 aa).

4 LRR repeats span residues 49-70 (NCER…NGLK), 71-92 (NLKI…EAVG), 94-115 (TLEE…HVMK), and 116-137 (KLKV…LKLA). Residues 150-192 (NPLEEKYSADGNWIEEATKRLPKLKKLDGNPVIKQEEETEGES) form the LRRCT domain.

It belongs to the dynein light chain LC1-type family. In terms of assembly, interacts with DNAH5, a outer arm dynein heavy chain. Interacts with tubulin located within the A-tubule of the outer doublets in a ATP-independent manner.

It localises to the cytoplasm. It is found in the cytoskeleton. Its subcellular location is the cilium axoneme. Functionally, part of the multisubunit axonemal ATPase complexes that generate the force for cilia motility and govern beat frequency. Component of the outer arm dynein (ODA). May be involved in a mechanosensory feedback mechanism controlling ODA activity based on external conformational cues by tethering the outer arm dynein heavy chain (DNAH5) to the microtubule within the axoneme. This Danio rerio (Zebrafish) protein is Dynein axonemal light chain 1 (dnal1).